Reading from the N-terminus, the 470-residue chain is Glucose-1-phosphate adenylyltransferase large subunit 1 (470 aa).

The protein belongs to the bacterial/plant glucose-1-phosphate adenylyltransferase family. Heterotetramer. In terms of tissue distribution, prominently expressed in the leaves and a weaker expression is seen in the tubers.

The protein localises to the plastid. The protein resides in the chloroplast. Its subcellular location is the amyloplast. It carries out the reaction alpha-D-glucose 1-phosphate + ATP + H(+) = ADP-alpha-D-glucose + diphosphate. The protein operates within glycan biosynthesis; starch biosynthesis. Its activity is regulated as follows. Activated by 3'phosphoglycerate, inhibited by orthophosphate. Allosteric regulation. This protein plays a role in synthesis of starch. It catalyzes the synthesis of the activated glycosyl donor, ADP-glucose from Glc-1-P and ATP. The sequence is that of Glucose-1-phosphate adenylyltransferase large subunit 1 (AGPS1) from Solanum tuberosum (Potato).